The primary structure comprises 600 residues: Arginine--tRNA ligase (600 aa).

Residues 123–133 (PNVAKPMHVGH) carry the 'HIGH' region motif.

This sequence belongs to the class-I aminoacyl-tRNA synthetase family. Monomer.

Its subcellular location is the cytoplasm. The catalysed reaction is tRNA(Arg) + L-arginine + ATP = L-arginyl-tRNA(Arg) + AMP + diphosphate. The polypeptide is Arginine--tRNA ligase (Caulobacter vibrioides (strain NA1000 / CB15N) (Caulobacter crescentus)).